A 128-amino-acid chain; its full sequence is Serum amyloid A-4 protein (128 aa).

The signal sequence occupies residues 1–18 (MKLFIGLIFCSLVMGVSS). The disordered stretch occupies residues 93–128 (SSEREEDQVSNRRAEEWGRSGQDPDHFRPAGLPKKY). The segment covering 99–120 (DQVSNRRAEEWGRSGQDPDHFR) has biased composition (basic and acidic residues).

It belongs to the SAA family. Apolipoprotein of the HDL complex.

The protein resides in the secreted. Its function is as follows. Major acute phase reactant. The polypeptide is Serum amyloid A-4 protein (Sus scrofa (Pig)).